The primary structure comprises 131 residues: Profilin-1 (131 aa).

This sequence belongs to the profilin family. As to quaternary structure, occurs in many kinds of cells as a complex with monomeric actin in a 1:1 ratio. Cytoplasmic distribution in hypocotyls. In root nodules, it is found in all cells, but is more abundant in the vascular tissue as well as the endodermis.

It localises to the cytoplasm. The protein resides in the cytoskeleton. In terms of biological role, binds to actin and affects the structure of the cytoskeleton. At high concentrations, profilin prevents the polymerization of actin, whereas it enhances it at low concentrations. By binding to PIP2, it inhibits the formation of IP3 and DG. The polypeptide is Profilin-1 (Phaseolus vulgaris (Kidney bean)).